Here is a 504-residue protein sequence, read N- to C-terminus: ATP synthase subunit alpha (504 aa).

Position 169–176 (169–176 (GDRQTGKT)) interacts with ATP.

Belongs to the ATPase alpha/beta chains family. In terms of assembly, F-type ATPases have 2 components, CF(1) - the catalytic core - and CF(0) - the membrane proton channel. CF(1) has five subunits: alpha(3), beta(3), gamma(1), delta(1), epsilon(1). CF(0) has three main subunits: a(1), b(2) and c(9-12). The alpha and beta chains form an alternating ring which encloses part of the gamma chain. CF(1) is attached to CF(0) by a central stalk formed by the gamma and epsilon chains, while a peripheral stalk is formed by the delta and b chains.

Its subcellular location is the cell membrane. The enzyme catalyses ATP + H2O + 4 H(+)(in) = ADP + phosphate + 5 H(+)(out). Its function is as follows. Produces ATP from ADP in the presence of a proton gradient across the membrane. The alpha chain is a regulatory subunit. The polypeptide is ATP synthase subunit alpha (Clostridium kluyveri (strain ATCC 8527 / DSM 555 / NBRC 12016 / NCIMB 10680 / K1)).